An 858-amino-acid chain; its full sequence is ATP-dependent DNA helicase Q-like SIM (858 aa).

Residues 2–44 (DLSSDQLVMKIVEMGFEKLDALEAVKAVGGKSCDDAVEYILKG) enclose the UBA domain. In terms of domain architecture, Helicase ATP-binding spans 177–353 (LSTWVAHKDC…LESLHLSKET (177 aa)). 190–197 (AATGSGKS) contacts ATP. Positions 288-291 (DEAH) match the DEAH box motif. Residues 402 to 450 (LAVISRESEEQTDFGSHDSENIHETDYDEDEEDQENSLAKKNSSNGKEL) form a disordered region. Basic and acidic residues predominate over residues 416–426 (GSHDSENIHET). Residues 427–436 (DYDEDEEDQE) show a composition bias toward acidic residues. Positions 437 to 448 (NSLAKKNSSNGK) are enriched in polar residues. The Helicase C-terminal domain maps to 491–627 (EKQKDLEGLT…QTEQAYKMLS (137 aa)). The disordered stretch occupies residues 822–858 (RQRLERRERKPRRERKPRKKRTRGRSSTKLHPWRSKE). Positions 830 to 858 (RKPRRERKPRKKRTRGRSSTKLHPWRSKE) are enriched in basic residues.

This sequence belongs to the helicase family. RecQ subfamily. It depends on Mg(2+) as a cofactor. Requires Mn(2+) as cofactor. In terms of tissue distribution, mostly expressed in roots and seedlings, and, to a lower extent, in leaves, shoots, shoot apical mersitem, inflorescences, flowers, siliques and seeds.

The protein localises to the nucleus. It catalyses the reaction Couples ATP hydrolysis with the unwinding of duplex DNA by translocating in the 3'-5' direction.. The enzyme catalyses ATP + H2O = ADP + phosphate + H(+). In terms of biological role, plant specific, probable 3'-5' DNA helicase that may play a role in the repair of DNA. This Arabidopsis thaliana (Mouse-ear cress) protein is ATP-dependent DNA helicase Q-like SIM (RECQSIM).